The sequence spans 106 residues: L-rhamnose mutarotase (106 aa).

Residue Y20 participates in substrate binding. Residue H24 is the Proton donor of the active site. Substrate contacts are provided by residues Y43 and 78 to 79 (WW).

This sequence belongs to the rhamnose mutarotase family. As to quaternary structure, homodimer.

It localises to the cytoplasm. It catalyses the reaction alpha-L-rhamnose = beta-L-rhamnose. It functions in the pathway carbohydrate degradation; L-rhamnose degradation. Involved in the anomeric conversion of L-rhamnose. The protein is L-rhamnose mutarotase (rhaM) of Rhizobium leguminosarum bv. trifolii.